The chain runs to 21 residues: Endo-1,4-beta-xylanase A (21 aa).

It belongs to the glycosyl hydrolase 10 (cellulase F) family.

The enzyme catalyses Endohydrolysis of (1-&gt;4)-beta-D-xylosidic linkages in xylans.. The protein operates within glycan degradation; xylan degradation. This Dictyoglomus sp. (strain B4A) protein is Endo-1,4-beta-xylanase A.